An 817-amino-acid polypeptide reads, in one-letter code: Disks large homolog 3 (817 aa).

N-acetylmethionine is present on residues Met-1 and His-2. The interval 33–101 (WQVPDPYGPG…GKSTPKLNGS (69 aa)) is disordered. Gly residues predominate over residues 40 to 53 (GPGGGNGASAGYGG). The segment covering 57–69 (QTLPSQAGATPTP) has biased composition (polar residues). PDZ domains follow at residues 130–217 (EEIV…VRRR), 226–311 (EVNL…KVAK), and 379–465 (DFTR…VAQY). The residue at position 139 (Ser-139) is a Phosphoserine. Residues 501–571 (KRSLYVRALF…PSKKRVEKKE (71 aa)) enclose the SH3 domain. The Guanylate kinase-like domain occupies 627–802 (ARPVIILGPM…IYNKIKQIIE (176 aa)). Tyr-673 is modified (phosphotyrosine).

This sequence belongs to the MAGUK family. In terms of assembly, interacts through its PDZ domains with NETO1, GRIN2B and SYNGAP1. Interacts through its guanylate kinase-like domain with DLGAP1, DLGAP2, DLGAP3 and DLGAP4. Interacts with FLTP/C1orf192. Interacts through its PDZ domains with APC. Interacts through its first two PDZ domains with ERBB4. Interacts through its third PDZ domain with NLGN1, and probably with NLGN2 and NLGN3. Interacts with FRMPD4 (via C-terminus). Interacts with LRFN1, LRFN2 and LRFN4. Interacts with DGKI (via PDZ-binding motif).

Its function is as follows. Required for learning most likely through its role in synaptic plasticity following NMDA receptor signaling. The chain is Disks large homolog 3 (DLG3) from Homo sapiens (Human).